The chain runs to 449 residues: MFS-type transporter hasB (449 aa).

Helical transmembrane passes span 44–64, 80–100, 112–132, 135–155, 168–188, 195–215, 255–275, 296–316, 322–342, 346–366, 387–407, and 415–435; these read VAGSFLLQFCSFGYVNACGIF, ALAWITTLQIFLLFMFGPAVG, LPPFSIGAVFSVCMLSLCTKY, VMLAQGVAFGLAAAGLSLPAM, LAVGIVSAGSSLGGVIYPCML, VGFASAVRWTALMQGILLFIA, LPWGFFVLGCFFTMWGLFAPL, AIANAGSLVGRIVPGWVSDII, MCIVTSLSGVLVLAFWLPLEF, LAGIIVFALLFGFVSGGFVSL, GGFCLAIALGALTGLPIEGAI, and FTGLMCFAGATMILGGVCTGT.

It belongs to the major facilitator superfamily. Monocarboxylate porter (TC 2.A.1.13) family.

The protein localises to the membrane. Its function is as follows. MFS-type transporter; part of the gene cluster that mediates the biosynthesis of hexadehydro-astechrome (HAS), a tryptophan-derived iron(III)-complex that acts as a virulence factor in infected mice. Required for the production of HAS. The protein is MFS-type transporter hasB of Aspergillus fumigatus (strain CBS 144.89 / FGSC A1163 / CEA10) (Neosartorya fumigata).